The sequence spans 20 residues: Agglutinin beta-3 chain (20 aa).

The disordered stretch occupies residues 1–20 (GPNGKSQSIIVGPWGDRVTN).

Belongs to the jacalin lectin family. As to quaternary structure, formed of four alpha chains and four beta chains.

Its function is as follows. D-galactose-specific lectin, binds the T-antigen structure Gal-beta1,3-GalNAc. In Maclura pomifera (Osage orange), this protein is Agglutinin beta-3 chain.